Reading from the N-terminus, the 335-residue chain is UPF0353 protein MAP_1207 (335 aa).

The next 2 membrane-spanning stretches (helical) occupy residues 18–38 (WFFLFLLVVAGLAALYILMQL) and 67–87 (LPAILLVASLVLFTIAMAGPT). Positions 98–294 (VVMLVIDVSQ…QELKSVYATL (197 aa)) constitute a VWFA domain. The helical transmembrane segment at 309–329 (VGWVRLGALVLALAALTALLI) threads the bilayer.

The protein belongs to the UPF0353 family.

It is found in the cell membrane. The protein is UPF0353 protein MAP_1207 of Mycolicibacterium paratuberculosis (strain ATCC BAA-968 / K-10) (Mycobacterium paratuberculosis).